A 347-amino-acid chain; its full sequence is UPF0284 protein M1425_0030 (347 aa).

It belongs to the UPF0284 family.

This is UPF0284 protein M1425_0030 from Saccharolobus islandicus (strain M.14.25 / Kamchatka #1) (Sulfolobus islandicus).